The following is a 753-amino-acid chain: Polyadenylate-binding protein, cytoplasmic and nuclear (753 aa).

The segment covering 1–43 (MSAEASTTPAAETPVNGTPETSTTPAAPAAEATAAETAAPSTS) has biased composition (low complexity). Residues 1–49 (MSAEASTTPAAETPVNGTPETSTTPAAPAAEATAAETAAPSTSQPHSAS) are disordered. RRM domains follow at residues 48 to 126 (ASLY…WSQR), 136 to 213 (GNVF…HHIS), 229 to 306 (TNVY…RAQK), and 332 to 460 (VNLY…LAQR). Disordered stretches follow at residues 363–417 (VMRD…SDKK), 607–649 (RGPG…PAAG), and 727–753 (GTEGEAAGEAPKPKEAATEESTEENKS). The segment covering 376-417 (DSDKEKKEESKEEKPEAAEKTEEAAKESGDDQDKENKKSDKK) has biased composition (basic and acidic residues). Gly residues predominate over residues 607 to 619 (RGPGYGQGRGGVP). Low complexity predominate over residues 633–649 (QNAQPAAGRGEEAPAAG). The PABC domain maps to 647-724 (AAGLTAQSLA…ALSVYDEYMK (78 aa)). The span at 737–753 (PKPKEAATEESTEENKS) shows a compositional bias: basic and acidic residues.

This sequence belongs to the polyadenylate-binding protein type-1 family.

The protein localises to the cytoplasm. It is found in the nucleus. Binds the poly(A) tail of mRNA. Appears to be an important mediator of the multiple roles of the poly(A) tail in mRNA biogenesis, stability and translation. In the nucleus, involved in both mRNA cleavage and polyadenylation. Is also required for efficient mRNA export to the cytoplasm. Acts in concert with a poly(A)-specific nuclease (PAN) to affect poly(A) tail shortening, which may occur concomitantly with either nucleocytoplasmic mRNA transport or translational initiation. In the cytoplasm, stimulates translation initiation and regulates mRNA decay through translation termination-coupled poly(A) shortening, probably mediated by PAN. This is Polyadenylate-binding protein, cytoplasmic and nuclear (pab1) from Aspergillus terreus (strain NIH 2624 / FGSC A1156).